Reading from the N-terminus, the 143-residue chain is ATP synthase F(0) complex subunit C2, mitochondrial (143 aa).

The N-terminal 68 residues, 1 to 68, are a transit peptide targeting the mitochondrion; it reads MYTCAKFVST…RSFQTSAISR (68 aa). A helical transmembrane segment spans residues 84–104; the sequence is VGVAGSGAGIGTVFGSLIIGY. The residue at position 111 (lysine 111) is an N6,N6,N6-trimethyllysine. The chain crosses the membrane as a helical span at residues 119 to 139; sequence ILGFALSEAMGLFCLMVAFLI.

The protein belongs to the ATPase C chain family. F-type ATPases have 2 components, CF(1) - the catalytic core - and CF(0) - the membrane proton channel. CF(1) has five subunits: alpha(3), beta(3), gamma(1), delta(1), epsilon(1). CF(0) has three main subunits: a, b and c. Interacts with DNAJC30; interaction is direct. In terms of processing, trimethylated by ATPSCKMT at Lys-111. Methylation is required for proper incorporation of the C subunit into the ATP synthase complex and mitochondrial respiration.

The protein resides in the mitochondrion membrane. In terms of biological role, mitochondrial membrane ATP synthase (F(1)F(0) ATP synthase or Complex V) produces ATP from ADP in the presence of a proton gradient across the membrane which is generated by electron transport complexes of the respiratory chain. F-type ATPases consist of two structural domains, F(1) - containing the extramembraneous catalytic core and F(0) - containing the membrane proton channel, linked together by a central stalk and a peripheral stalk. During catalysis, ATP synthesis in the catalytic domain of F(1) is coupled via a rotary mechanism of the central stalk subunits to proton translocation. Part of the complex F(0) domain. A homomeric c-ring of probably 10 subunits is part of the complex rotary element. This is ATP synthase F(0) complex subunit C2, mitochondrial from Ovis aries (Sheep).